The chain runs to 179 residues: Adenine phosphoribosyltransferase (179 aa).

The protein belongs to the purine/pyrimidine phosphoribosyltransferase family. In terms of assembly, homodimer.

The protein resides in the cytoplasm. It catalyses the reaction AMP + diphosphate = 5-phospho-alpha-D-ribose 1-diphosphate + adenine. It participates in purine metabolism; AMP biosynthesis via salvage pathway; AMP from adenine: step 1/1. In terms of biological role, catalyzes a salvage reaction resulting in the formation of AMP, that is energically less costly than de novo synthesis. This is Adenine phosphoribosyltransferase from Bradyrhizobium diazoefficiens (strain JCM 10833 / BCRC 13528 / IAM 13628 / NBRC 14792 / USDA 110).